Here is a 236-residue protein sequence, read N- to C-terminus: Large ribosomal subunit protein uL3 (236 aa).

Belongs to the universal ribosomal protein uL3 family. As to quaternary structure, part of the 50S ribosomal subunit. Forms a cluster with proteins L14 and L19.

One of the primary rRNA binding proteins, it binds directly near the 3'-end of the 23S rRNA, where it nucleates assembly of the 50S subunit. The polypeptide is Large ribosomal subunit protein uL3 (Anaeromyxobacter dehalogenans (strain 2CP-C)).